Here is an 872-residue protein sequence, read N- to C-terminus: MKELSSAQIRQMWLDFWKSKGHCVEPSANLVPVNDPTLLWINSGVATLKKYFDGSVITENPRITNAQKSIRTNDIENVGKTARHHTMFEMLGNFSIGDYFRDEAIEWGFELLTSPEWFDFPKDKLYMTYYPDDKDSYNRWIACGVEPSHLVPIEDNFWEIGAGPSGPDTEIFFDRGEDFDPENIGLRLLAEDIENDRYIEIWNIVLSQFNADPAVPRSEYKELPNKNIDTGAGLERLAAVMQGAKTNFETDLFMPIIREVEKLSGKTYDPDGDNMSFKVIADHIRALSFAIGDGALPGNEGRGYVLRRLLRRAVMHGRRLGINETFLYKLVLTVGQIMESYYPEVLEKRDFIEKIVKREEETFARTIDAGSGHLDSLLAQLKAEGKDTLEGKDIFKLYDTYGFPVELTEELAEDAGYKIDHEGFKSAMKEQQDRARAAVVKGGSMGMQNETLAGIVEESRFEYDTYSLESSLSVIIADNERTEAVSEGQALLVFAQTPFYAEMGGQVADTGRIKNDKGDTVAEVVDVQKAPNGQPLHTVNVLASLSVGTNYTLEINKERRLAVEKNHTATHLLHAALHNVIGEHATQAGSLNEEEFLRFDFTHFEAVSNEELRHIEQEVNEQIWNALTITTTETDVETAKEMGAMALFGEKYGKVVRVVQIGNYSVELCGGTHLNNSSEIGLFKIVKEEGIGSGTRRIIAVTGRQAFEAYRNQEDALKEIAATVKAPQLKDAAAKVQALSDSLRDFQKENAELKEKAAAAAAGDVFKDVQEAKGVRIIASQVDVADAGALRTFADNWKQKDYSDVLVLVAAIGEKVNVLVASKTKDVHAGNMIKELAPIVAGRGGGKPDMAMAGGSDASKIAELLAAVAETV.

The Zn(2+) site is built by His-567, His-571, Cys-669, and His-673.

The protein belongs to the class-II aminoacyl-tRNA synthetase family. Zn(2+) is required as a cofactor.

It localises to the cytoplasm. The catalysed reaction is tRNA(Ala) + L-alanine + ATP = L-alanyl-tRNA(Ala) + AMP + diphosphate. Its function is as follows. Catalyzes the attachment of alanine to tRNA(Ala) in a two-step reaction: alanine is first activated by ATP to form Ala-AMP and then transferred to the acceptor end of tRNA(Ala). Also edits incorrectly charged Ser-tRNA(Ala) and Gly-tRNA(Ala) via its editing domain. This Streptococcus pyogenes serotype M5 (strain Manfredo) protein is Alanine--tRNA ligase.